Reading from the N-terminus, the 486-residue chain is Glutamate--tRNA ligase 2 (486 aa).

The 'HIGH' region motif lies at 12-22 (PSPTGELHIGN). The 'KMSKS' region motif lies at 252-256 (KLSKR). Lys255 serves as a coordination point for ATP.

This sequence belongs to the class-I aminoacyl-tRNA synthetase family. Glutamate--tRNA ligase type 1 subfamily. Monomer.

It is found in the cytoplasm. The enzyme catalyses tRNA(Glu) + L-glutamate + ATP = L-glutamyl-tRNA(Glu) + AMP + diphosphate. Catalyzes the attachment of glutamate to tRNA(Glu) in a two-step reaction: glutamate is first activated by ATP to form Glu-AMP and then transferred to the acceptor end of tRNA(Glu). This chain is Glutamate--tRNA ligase 2, found in Syntrophus aciditrophicus (strain SB).